A 206-amino-acid chain; its full sequence is Large ribosomal subunit protein uL4 (206 aa).

The tract at residues 47 to 94 (NRAQKGRAEVSKSTRKPWRQKGTGRARAGMASSPLWRGGGRVFPNSPE) is disordered. A compositionally biased stretch (basic residues) spans 59–70 (STRKPWRQKGTG).

Belongs to the universal ribosomal protein uL4 family. Part of the 50S ribosomal subunit.

Its function is as follows. One of the primary rRNA binding proteins, this protein initially binds near the 5'-end of the 23S rRNA. It is important during the early stages of 50S assembly. It makes multiple contacts with different domains of the 23S rRNA in the assembled 50S subunit and ribosome. In terms of biological role, forms part of the polypeptide exit tunnel. This Aromatoleum aromaticum (strain DSM 19018 / LMG 30748 / EbN1) (Azoarcus sp. (strain EbN1)) protein is Large ribosomal subunit protein uL4.